We begin with the raw amino-acid sequence, 254 residues long: MSAELNVPIDPSAPACPEPGHKGMDYRDWVRRSYLELVTSNHHSVQALSWRKLYLSRAKLKASSRTSALLSGFAMVAMVEVQLETQYQYPRPLLIAFSACTTVLVAVHLFALLISTCILPNVEAVSNIHNLNSISESPHERMHPYIELAWGFSTVLGILLFLAEVVLLCWIKFLPVDARRQPGPPPGPGSHTGWQAALVSTIIMVPVGLIFVVFTIHFYRSLVRHKTERHNREIEELHKLKVQLDGHERSLQVL.

The next 4 helical transmembrane spans lie at 66–83 (TSAL…EVQL), 94–114 (LIAF…ALLI), 148–168 (LAWG…VVLL), and 196–216 (AALV…VFTI).

Belongs to the Orai family. Oligomerizes in homomeric and heteromeric ORAI complexes. Native CRAC channels most likely consist of hexameric ORAI heteromers, implying that diverse ORAI1, ORAI2 and ORAI3 subunit combinations with distinct biophysical properties can operate in a cell-type specific way. Interacts with STIM1; this regulates channel activity. Interacts with CRACR2A/EFCAB4B.

The protein resides in the cell membrane. It catalyses the reaction Ca(2+)(in) = Ca(2+)(out). Its activity is regulated as follows. CRAC channels are regulated by fast Ca(2+)-dependent inactivation (FCDI), a mechanism that limits Ca(2+) influx and cell toxicity. ORAI2 channels display prominent FCDI. Inhibited by lanthanides such as Gd(3+) ions. Its function is as follows. Pore-forming subunit of inward rectifying Ca(2+) release-activated Ca(2+) (CRAC) channels. Assembles with ORAI1 and ORAI3 to form hexameric CRAC channels that mediate Ca(2+) influx upon depletion of endoplasmic reticulum Ca(2+) store and channel activation by Ca(2+) sensor STIM1, a process known as store-operated Ca(2+) entry (SOCE). Various pore subunit combinations may account for distinct CRAC channel spatiotemporal and cell-type specific dynamics. ORAI1 mainly contributes to the generation of Ca(2+) plateaus involved in sustained Ca(2+) entry and is dispensable for cytosolic Ca(2+) oscillations, whereas ORAI2 and ORAI3 generate oscillatory patterns. CRAC channels assemble in Ca(2+) signaling microdomains where Ca(2+) influx is coupled to calmodulin and calcineurin signaling and activation of NFAT transcription factors recruited to ORAI1 via AKAP5. CRAC channels are the main pathway for Ca(2+) influx in T cells and promote the immune response to pathogens by activating NFAT-dependent cytokine and chemokine transcription. The sequence is that of Protein orai-2 (ORAI2) from Homo sapiens (Human).